The chain runs to 342 residues: Oxygen-dependent coproporphyrinogen-III oxidase (342 aa).

S98 contacts substrate. A divalent metal cation contacts are provided by H102 and H112. Residue H112 is the Proton donor of the active site. 114-116 (NYR) is a binding site for substrate. Residues H146 and H176 each coordinate a divalent metal cation. The interval 266–301 (YVEFNLVWDRGTIFGLQTNGRTESILMSLPPLARWE) is important for dimerization.

It belongs to the aerobic coproporphyrinogen-III oxidase family. Homodimer. Requires a divalent metal cation as cofactor.

It localises to the cytoplasm. The enzyme catalyses coproporphyrinogen III + O2 + 2 H(+) = protoporphyrinogen IX + 2 CO2 + 2 H2O. Its pathway is porphyrin-containing compound metabolism; protoporphyrin-IX biosynthesis; protoporphyrinogen-IX from coproporphyrinogen-III (O2 route): step 1/1. In terms of biological role, involved in the heme and chlorophyll biosynthesis. Catalyzes the aerobic oxidative decarboxylation of propionate groups of rings A and B of coproporphyrinogen-III to yield the vinyl groups in protoporphyrinogen-IX. This is Oxygen-dependent coproporphyrinogen-III oxidase from Prochlorococcus marinus (strain AS9601).